We begin with the raw amino-acid sequence, 148 residues long: Ribonuclease H (148 aa).

Residues 1–142 (MSDSVEMFTD…ADQLANRGVD (142 aa)) form the RNase H type-1 domain. Mg(2+) is bound by residues D10, E48, D70, and D134.

Belongs to the RNase H family. In terms of assembly, monomer. Mg(2+) is required as a cofactor.

It is found in the cytoplasm. The enzyme catalyses Endonucleolytic cleavage to 5'-phosphomonoester.. Endonuclease that specifically degrades the RNA of RNA-DNA hybrids. This chain is Ribonuclease H, found in Pseudomonas putida (strain ATCC 700007 / DSM 6899 / JCM 31910 / BCRC 17059 / LMG 24140 / F1).